A 172-amino-acid polypeptide reads, in one-letter code: Adenine phosphoribosyltransferase (172 aa).

The protein belongs to the purine/pyrimidine phosphoribosyltransferase family. Homodimer.

It localises to the cytoplasm. It catalyses the reaction AMP + diphosphate = 5-phospho-alpha-D-ribose 1-diphosphate + adenine. It participates in purine metabolism; AMP biosynthesis via salvage pathway; AMP from adenine: step 1/1. Catalyzes a salvage reaction resulting in the formation of AMP, that is energically less costly than de novo synthesis. This Gloeothece citriformis (strain PCC 7424) (Cyanothece sp. (strain PCC 7424)) protein is Adenine phosphoribosyltransferase.